The chain runs to 297 residues: GATA transcription factor 24 (297 aa).

A Tify domain is found at 73-108 (GIENGDQLTLSFQGQVYVFDRVSPEKVQAVLLLLGG). Positions 143–185 (RLASLLRFREKRKGRNFDKTIRYTVRKEVALRMQRKKGQFTSA) constitute a CCT domain. A disordered region spans residues 178–203 (KKGQFTSAKSSNDDSGSTGSDWGSNQ). The span at 190–201 (DDSGSTGSDWGS) shows a compositional bias: low complexity. Residues 213–269 (QKPEVLCRHCGTSEKSTPMMRRGPDGPRTLCNACGLMWANKGTLRDLSKVPPPQTPQ) form a GATA-type zinc finger.

Belongs to the type IV zinc-finger family. Class C subfamily. Predominantly expressed in shoot apices, inflorescences and roots.

The protein localises to the nucleus. Its function is as follows. Transcriptional activator that specifically binds 5'-GATA-3' or 5'-GAT-3' motifs within gene promoters. This chain is GATA transcription factor 24 (GATA24), found in Arabidopsis thaliana (Mouse-ear cress).